Here is a 1515-residue protein sequence, read N- to C-terminus: MDNQQDKVIAASANGDNNLINGVKNNDSEDQEVAMKSFVALEATTPIQPIPVIQKESPMFPRGLLPPPSKKPCMQSPPSPLALIEAPDHSANSASVNAISLTSGVAKGLNTWSLPNECEKAPFAIMEPAGMSALNGDCLMQPSRTCLGCFMESKEAVDPEPGISLKVSDLNRDYETCAVSDIGIQCINAGENIKYGEQLLSDQLLGFPLHKSRAGDRRESEKPDIDLEDPTQKSYYEALLLDKCNTEEALLANSNQDWGYFETFISESKIELLDLCSKNELSVNLFSEEDVENYMFDDDESTLGSDVCSLKIRYESFQDNVRDKTTLLMQEDAQFNFFPSVFTTCPKRESKSGILKQSSDLSQFKVPDVSIIWGEEDKNLDKKKGKEEVHEDKSIETKDEKDNGEKPALNNKPCGGLEVEQFKNLKADQLTNSLETSGNFSDDSSFIEVSYDAMGEIKDCSRYMARDTNSGSSSSQQNYGLRAKRKVRYSEDYLYDVDSLEGEKVNERKEWPPGGSKEEDDDEWCPKKRRKVTRKEPPVIIKYIIINRFKGEKNMLVKLSKVDASETTVNLSENQLSKYAKLSPLKGFWQKKKKQKNSNTDSVKTPLCQKQSFEPGSFEVSFLPPARKRKSKLGNRHRIQRIQSVETSASSKQVSFCSDQKQACNRKEDGVKGTPKSALLTDPSCANGSHLRGLIVSDSVKVKAQDTEFKGPERKVLNKIKFKSEARLKSKKIKAGQENKPVVQMSPVSEDTSSKANLKNEVTPGTSNSSHMSEFHETKVKNSTFLPTTCSSEMPLSSANVATNIPVIPGGYLQTLLDASDLSNNTSISYFTNHSAEQNEGSLTQTEKAFVPLQSAQDCVLSSSSDSQLQQSSQNFKMEASNFGSLWPDKDTSGSQEFMTEVSREIATNQSSEFEASQVVSMENNLTAITYSPVCLNSDASGCNKVLYASLQDSHLPPEDLYQLCHFNNGEICFPFQQGPLSTDDDGRLFSFDSMTSLTVSSSNYCSLSLKSCEKDGDDEINDDFLAHCSPKLVIQQSIDEIAPLKESTDLLDISNFTPDKFRHSSLLEMSPPDTPSLSPQSTRCESIKTLGTMKGFQEGVPGSLSTVEKIKWDCNTLSQQAQADDGFTLNSHQFQFHMFNDEDSVGLLQKSPCLSTFDEPAGQINTNSKVSKSRKKTSPGKSGAVSQSSSQKNSRKKSPKASNKGVEKPPSKTSRQVPKSTKKGKYVAAVNGEKMQIGIGHSGGQPNSTSSNAKTLTECIQHGGPVASMKIPSQKGLSGDWALGKESRPGWNDMSVVTNTNNLLDDDQREFQEPSYILSNIASGMADVQRFMMASMEPLWEPMEHQGESNTFYSPDSNSLKLKTLKILAGTPQESKKKVTNGSSGATKNHRSVKAVSKSNGKAAIGEPGHADMPGSSEDSRSAFFDKKYSNVNTLGNNGPTHKKLYRHKSSSKGLRDEKYKGKRVEREQAHKDEAGTTSFEKLRDSNYNLLKAETAFGVLPVFEEETHIFQKDI.

Residues 381-405 (DKKKGKEEVHEDKSIETKDEKDNGE) show a composition bias toward basic and acidic residues. 6 disordered regions span residues 381–415 (DKKK…KPCG), 505–529 (VNER…PKKR), 731–774 (KKIK…HMSE), 1158–1225 (FDEP…TKKG), 1372–1422 (TPQE…EDSR), and 1435–1479 (TLGN…AGTT). 2 stretches are compositionally biased toward polar residues: residues 746 to 757 (SPVSEDTSSKAN) and 763 to 772 (TPGTSNSSHM). Residues 1180-1193 (PGKSGAVSQSSSQK) are compositionally biased toward low complexity. A compositionally biased stretch (basic residues) spans 1442–1452 (THKKLYRHKSS). Residues 1455–1479 (GLRDEKYKGKRVEREQAHKDEAGTT) are compositionally biased toward basic and acidic residues.

As to expression, expressed in the brain, particularly during the late embryonic and perinatal stages of development. In the developing brain, it is expressed only in the cortical plate and subplate region but not in the intermediate or ventricular zone.

Its subcellular location is the nucleus. It localises to the cytoplasm. In terms of biological role, involved in neurite outgrowth by regulating cell-cell adhesion via the N-cadherin signaling pathway. May act by regulating expression of protein-coding genes, such as N-cadherins and integrin beta-1 (ITGB1). In Mus musculus (Mouse), this protein is Neurite extension and migration factor.